Here is a 405-residue protein sequence, read N- to C-terminus: Acetate kinase (405 aa).

Position 10 (N10) interacts with Mg(2+). An ATP-binding site is contributed by K17. Substrate is bound at residue R93. Catalysis depends on D150, which acts as the Proton donor/acceptor. ATP is bound by residues 210–214 (HLGNG), 284–286 (DMR), and 332–336 (GVGEN). Mg(2+) is bound at residue E386.

The protein belongs to the acetokinase family. Homodimer. Mg(2+) serves as cofactor. The cofactor is Mn(2+).

The protein resides in the cytoplasm. The catalysed reaction is acetate + ATP = acetyl phosphate + ADP. The protein operates within metabolic intermediate biosynthesis; acetyl-CoA biosynthesis; acetyl-CoA from acetate: step 1/2. Functionally, catalyzes the formation of acetyl phosphate from acetate and ATP. Can also catalyze the reverse reaction. The polypeptide is Acetate kinase (Streptomyces avermitilis (strain ATCC 31267 / DSM 46492 / JCM 5070 / NBRC 14893 / NCIMB 12804 / NRRL 8165 / MA-4680)).